Reading from the N-terminus, the 146-residue chain is Ferredoxin-type protein FwdE (146 aa).

2 4Fe-4S ferredoxin-type domains span residues 90–115 (IKLF…TLDN) and 116–145 (FTVG…FIKE). Cys-125, Cys-128, Cys-131, and Cys-135 together coordinate [4Fe-4S] cluster.

[4Fe-4S] cluster serves as cofactor.

The chain is Ferredoxin-type protein FwdE (fwdE) from Methanocaldococcus jannaschii (strain ATCC 43067 / DSM 2661 / JAL-1 / JCM 10045 / NBRC 100440) (Methanococcus jannaschii).